The following is a 115-amino-acid chain: U3-lycotoxin-Ls1r (115 aa).

The signal sequence occupies residues 1 to 20; sequence MKFVLLFGVLLVTLFSYSSA. The propeptide occupies 21–44; sequence EMLDDFHQADEDELVSLIKKEEAR. 4 disulfide bridges follow: C48–C63, C55–C72, C62–C87, and C74–C85.

The protein belongs to the neurotoxin 19 (CSTX) family. 01 subfamily. Expressed by the venom gland.

The protein localises to the secreted. This chain is U3-lycotoxin-Ls1r, found in Lycosa singoriensis (Wolf spider).